A 302-amino-acid chain; its full sequence is FeMo cofactor biosynthesis protein NifB (302 aa).

The Radical SAM core domain occupies 22–264; the sequence is HDKYGRVHLP…PQFRACGQCR (243 aa). Positions 36, 40, and 43 each coordinate [4Fe-4S] cluster. S-adenosyl-L-methionine contacts are provided by G91, T142, and I194. Positions 260 and 263 each coordinate [4Fe-4S] cluster.

Belongs to the radical SAM superfamily. NifB family. Monomer. It depends on [4Fe-4S] cluster as a cofactor.

Its pathway is cofactor biosynthesis; Fe-Mo cofactor biosynthesis. Functionally, involved in the biosynthesis of the iron-molybdenum cofactor (FeMo-co or M-cluster) found in the dinitrogenase enzyme of the nitrogenase complex in nitrogen-fixing microorganisms. NifB catalyzes the crucial step of radical SAM-dependent carbide insertion that occurs concomitant with the insertion of a 9th sulfur and the rearrangement/coupling of two [4Fe-4S] clusters into a [8Fe-9S-C] cluster, the precursor to the M-cluster. This Methanocaldococcus infernus (strain DSM 11812 / JCM 15783 / ME) protein is FeMo cofactor biosynthesis protein NifB.